A 338-amino-acid polypeptide reads, in one-letter code: MIRVAINGYGRIGRSILRALYESGKRQQIQIVAINELAKPEAIVHLTQYDTTHGRFQPRVKLVDDQMLIGDDVIKILHEPDPAKLPWHEMDIDIVYEATGAILDRNSCEAHIHAGAKQVLISHPSSADVDGTIVYGVNQDLLRAEHTVVSNASCTTNCIVPVIDVLDKHFGVKSGAITTIHSAMNDQQVIDAYHDDLRRTRAAGQSIIPVDTKLARGIERILPHMKDKFEAISVRVPTINVTAIDLSVTLDKTVDIATVNQVLELAANGRFNGILGYTDEPLVSCDFNHDPRSSIVDGTQTRVSAGQLVKLLLWCDNEWGFANRMLDTSLAMIAAKQS.

NAD(+) is bound at residue 11–12; it reads RI. Substrate contacts are provided by residues 153–155, arginine 199, 212–213, and arginine 235; these read SCT and TK. The active-site Nucleophile is cysteine 154. Asparagine 317 is an NAD(+) binding site.

It belongs to the glyceraldehyde-3-phosphate dehydrogenase family. Epd subfamily. As to quaternary structure, homotetramer.

The protein localises to the cytoplasm. It carries out the reaction D-erythrose 4-phosphate + NAD(+) + H2O = 4-phospho-D-erythronate + NADH + 2 H(+). It participates in cofactor biosynthesis; pyridoxine 5'-phosphate biosynthesis; pyridoxine 5'-phosphate from D-erythrose 4-phosphate: step 1/5. In terms of biological role, catalyzes the NAD-dependent conversion of D-erythrose 4-phosphate to 4-phosphoerythronate. The protein is D-erythrose-4-phosphate dehydrogenase of Shewanella sp. (strain MR-4).